The chain runs to 871 residues: Translation initiation factor IF-2 (871 aa).

Disordered stretches follow at residues 60-101 (KKNI…QEVK) and 184-203 (ESLK…KKES). A compositionally biased stretch (basic residues) spans 61 to 72 (KNIKTPTAKKPK). A compositionally biased stretch (basic and acidic residues) spans 73–101 (KENIKEQEKLNESEKKEPKKEEKLKQEVK). A tr-type G domain is found at 370–537 (TRAPVITIMG…IVLLQADILE (168 aa)). Residues 379 to 386 (GHVDHGKT) are G1. 379-386 (GHVDHGKT) is a GTP binding site. Positions 404-408 (GITQH) are G2. Residues 425-428 (DTPG) form a G3 region. Residues 425 to 429 (DTPGH) and 479 to 482 (NKMD) contribute to the GTP site. Residues 479 to 482 (NKMD) are G4. Positions 515–517 (SAK) are G5.

This sequence belongs to the TRAFAC class translation factor GTPase superfamily. Classic translation factor GTPase family. IF-2 subfamily.

The protein resides in the cytoplasm. In terms of biological role, one of the essential components for the initiation of protein synthesis. Protects formylmethionyl-tRNA from spontaneous hydrolysis and promotes its binding to the 30S ribosomal subunits. Also involved in the hydrolysis of GTP during the formation of the 70S ribosomal complex. In Campylobacter jejuni (strain RM1221), this protein is Translation initiation factor IF-2.